A 33-amino-acid polypeptide reads, in one-letter code: Photosystem II reaction center protein Psb30 (33 aa).

The chain crosses the membrane as a helical span at residues 5–25; the sequence is IVAQLTVLALIVVSGPLVIAL.

It belongs to the Psb30/Ycf12 family. PSII is composed of 1 copy each of membrane proteins PsbA, PsbB, PsbC, PsbD, PsbE, PsbF, PsbH, PsbI, PsbJ, PsbK, PsbL, PsbM, PsbT, PsbX, PsbY, PsbZ, Psb30/Ycf12, peripheral proteins of the oxygen-evolving complex and a large number of cofactors. It forms dimeric complexes.

Its subcellular location is the plastid. The protein localises to the chloroplast thylakoid membrane. Its function is as follows. A core subunit of photosystem II (PSII), probably helps stabilize the reaction center. The protein is Photosystem II reaction center protein Psb30 of Angiopteris evecta (Mule's foot fern).